We begin with the raw amino-acid sequence, 198 residues long: Ribonuclease HII (198 aa).

An RNase H type-2 domain is found at 10 to 198 (QLVAGVDEVG…PVKRALGLAS (189 aa)). A divalent metal cation-binding residues include D16, E17, and D108.

This sequence belongs to the RNase HII family. Mn(2+) serves as cofactor. Requires Mg(2+) as cofactor.

Its subcellular location is the cytoplasm. The enzyme catalyses Endonucleolytic cleavage to 5'-phosphomonoester.. In terms of biological role, endonuclease that specifically degrades the RNA of RNA-DNA hybrids. The chain is Ribonuclease HII from Shigella dysenteriae serotype 1 (strain Sd197).